We begin with the raw amino-acid sequence, 247 residues long: Ribonuclease PH (247 aa).

Phosphate-binding positions include Arg-87 and 125-127; that span reads GTR.

It belongs to the RNase PH family. As to quaternary structure, homohexameric ring arranged as a trimer of dimers.

It catalyses the reaction tRNA(n+1) + phosphate = tRNA(n) + a ribonucleoside 5'-diphosphate. Functionally, phosphorolytic 3'-5' exoribonuclease that plays an important role in tRNA 3'-end maturation. Removes nucleotide residues following the 3'-CCA terminus of tRNAs; can also add nucleotides to the ends of RNA molecules by using nucleoside diphosphates as substrates, but this may not be physiologically important. Probably plays a role in initiation of 16S rRNA degradation (leading to ribosome degradation) during starvation. The sequence is that of Ribonuclease PH from Frankia casuarinae (strain DSM 45818 / CECT 9043 / HFP020203 / CcI3).